The primary structure comprises 366 residues: Probable UDP-arabinopyranose mutase 2 (366 aa).

Residues 104 to 106 (DDD) carry the DXD motif motif. A glycan (N-linked (Glc...) arginine) is linked at Arg152.

Belongs to the RGP family. As to quaternary structure, homopentamer or homohexamer. The cofactor is Mn(2+). Mg(2+) is required as a cofactor. In terms of processing, reversibly glycosylated by UDP-glucose, UDP-xylose and UDP-galactose, but not UDP-mannose. Expressed in all tissues tested, including root, tuber, leaf, petiole, shoot, stolon and stem.

The protein resides in the secreted. The protein localises to the cell wall. It localises to the cell junction. It is found in the plasmodesma. Its subcellular location is the golgi apparatus. It catalyses the reaction UDP-beta-L-arabinofuranose = UDP-beta-L-arabinopyranose. In terms of biological role, probable UDP-L-arabinose mutase involved in the biosynthesis of cell wall non-cellulosic polysaccharides. Was initially shown to possess an autoglycosylating activity which is dependent on the presence of UDP-glucose and manganese. The polypeptide is Probable UDP-arabinopyranose mutase 2 (Solanum tuberosum (Potato)).